The following is a 274-amino-acid chain: 2,3,4,5-tetrahydropyridine-2,6-dicarboxylate N-succinyltransferase (274 aa).

R106 and D143 together coordinate substrate.

It belongs to the transferase hexapeptide repeat family. In terms of assembly, homotrimer.

It localises to the cytoplasm. It catalyses the reaction (S)-2,3,4,5-tetrahydrodipicolinate + succinyl-CoA + H2O = (S)-2-succinylamino-6-oxoheptanedioate + CoA. Its pathway is amino-acid biosynthesis; L-lysine biosynthesis via DAP pathway; LL-2,6-diaminopimelate from (S)-tetrahydrodipicolinate (succinylase route): step 1/3. This chain is 2,3,4,5-tetrahydropyridine-2,6-dicarboxylate N-succinyltransferase, found in Rickettsia akari (strain Hartford).